A 95-amino-acid chain; its full sequence is Cytochrome b (95 aa).

Transmembrane regions (helical) follow at residues 1 to 16, 40 to 61, and 76 to 95; these read GLCL…FLAM, WLIR…YLHI, and WNIG…VGYV. Heme b-binding residues include H46 and H60.

The protein belongs to the cytochrome b family. In terms of assembly, the cytochrome bc1 complex contains 3 respiratory subunits (MT-CYB, CYC1 and UQCRFS1), 2 core proteins (UQCRC1 and UQCRC2) and probably 6 low-molecular weight proteins. Requires heme b as cofactor.

Its subcellular location is the mitochondrion inner membrane. Component of the ubiquinol-cytochrome c reductase complex (complex III or cytochrome b-c1 complex) that is part of the mitochondrial respiratory chain. The b-c1 complex mediates electron transfer from ubiquinol to cytochrome c. Contributes to the generation of a proton gradient across the mitochondrial membrane that is then used for ATP synthesis. This chain is Cytochrome b (mt-cyb), found in Gomphosus varius (Bird wrasse).